A 1138-amino-acid polypeptide reads, in one-letter code: Condensin-2 complex subunit G2 (1138 aa).

Ser-30 bears the Phosphoserine mark. One copy of the HEAT repeat lies at 459 to 497 (LLPTLRYSLHDNSEKVRVAFVDLLLKIKAVRAAKFWKIC). Thr-1114 carries the phosphothreonine modification.

In terms of assembly, component of the condensin-2 complex, which contains the SMC2 and SMC4 heterodimer, and 3 non SMC subunits that probably regulate the complex: NCAPH2, NCAPD3 and NCAPG2. In terms of tissue distribution, expressed in spleen, lung and testis as well as in hematopoietic cell lines.

The protein resides in the nucleus. Functionally, regulatory subunit of the condensin-2 complex, a complex which establishes mitotic chromosome architecture and is involved in physical rigidity of the chromatid axis. Is required for early embryonic development and is essential for viability and expansion of the inner cell mass (ICM) of the implanting blastocyst. This Mus musculus (Mouse) protein is Condensin-2 complex subunit G2 (Ncapg2).